The sequence spans 317 residues: MTTQLDALRNMTVVVADTGDIDAIKKYQPQDATTNPSLILSASSLPQYAPLIDEAIAYAKAKSADKTQQLIDAEDKLAVNIGLEILKIVPGRISTEVDARLSYDTQATVEKARKLIALYNEAGISNDRILIKIASTWQGIRAAEILEKEGINCNLTLLFSKAQARACAEAGVYLISPFVGRILDWYKANSDKKEYAPAEDPGVISVTKIYNYYKQYGYNTVVMGASFRNVGEITELAGCDRLTIAPALLKELQENSTALVRKLAFKGEVKAKPQPLTESQFYWQHNSDPMAVEKLADGIRKFAIDQEKLEKMLLEKF.

Lysine 132 functions as the Schiff-base intermediate with substrate in the catalytic mechanism.

Belongs to the transaldolase family. Type 1 subfamily. Homodimer.

The protein resides in the cytoplasm. It catalyses the reaction D-sedoheptulose 7-phosphate + D-glyceraldehyde 3-phosphate = D-erythrose 4-phosphate + beta-D-fructose 6-phosphate. It participates in carbohydrate degradation; pentose phosphate pathway; D-glyceraldehyde 3-phosphate and beta-D-fructose 6-phosphate from D-ribose 5-phosphate and D-xylulose 5-phosphate (non-oxidative stage): step 2/3. In terms of biological role, transaldolase is important for the balance of metabolites in the pentose-phosphate pathway. This is Transaldolase from Histophilus somni (strain 2336) (Haemophilus somnus).